A 476-amino-acid polypeptide reads, in one-letter code: Glycogen synthase (476 aa).

ADP-alpha-D-glucose is bound at residue K15.

Belongs to the glycosyltransferase 1 family. Bacterial/plant glycogen synthase subfamily.

The catalysed reaction is [(1-&gt;4)-alpha-D-glucosyl](n) + ADP-alpha-D-glucose = [(1-&gt;4)-alpha-D-glucosyl](n+1) + ADP + H(+). Its pathway is glycan biosynthesis; glycogen biosynthesis. Synthesizes alpha-1,4-glucan chains using ADP-glucose. This Bacillus cereus (strain Q1) protein is Glycogen synthase.